A 912-amino-acid polypeptide reads, in one-letter code: Nonsense-mediated mRNA decay factor SMG8 (912 aa).

The segment at 565–630 (EHSNRTPDAS…GEDEDETLEQ (66 aa)) is disordered. Polar residues predominate over residues 570 to 602 (TPDASTHPPMTNENSPHLSGSQKSQDSASNLTF). The span at 604 to 614 (MDEKRDEENKS) shows a compositional bias: basic and acidic residues.

Belongs to the SMG8 family.

In terms of biological role, involved in nonsense-mediated decay (NMD) of mRNAs containing premature stop codons. Probable component of kinase complex containing SMG1 and recruited to stalled ribosomes. The chain is Nonsense-mediated mRNA decay factor SMG8 from Culex quinquefasciatus (Southern house mosquito).